We begin with the raw amino-acid sequence, 646 residues long: Macrolide export ATP-binding/permease protein MacB (646 aa).

Residues 5 to 243 form the ABC transporter domain; that stretch reads IELKGVSRTY…TLPKTNRIRQ (239 aa). 41-48 lines the ATP pocket; that stretch reads GASGSGKS. The next 4 membrane-spanning stretches (helical) occupy residues 272-292, 518-538, 570-590, and 611-631; these read TLTM…VALG, FSIL…IGVM, IIEA…LSYI, and AAVA…YLPA.

The protein belongs to the ABC transporter superfamily. Macrolide exporter (TC 3.A.1.122) family. Homodimer. Part of the tripartite efflux system MacAB-TolC, which is composed of an inner membrane transporter, MacB, a periplasmic membrane fusion protein, MacA, and an outer membrane component, TolC. The complex forms a large protein conduit and can translocate molecules across both the inner and outer membranes. Interacts with MacA.

It localises to the cell inner membrane. Functionally, part of the tripartite efflux system MacAB-TolC. MacB is a non-canonical ABC transporter that contains transmembrane domains (TMD), which form a pore in the inner membrane, and an ATP-binding domain (NBD), which is responsible for energy generation. Confers resistance against macrolides. The sequence is that of Macrolide export ATP-binding/permease protein MacB from Escherichia coli.